An 88-amino-acid chain; its full sequence is Small ribosomal subunit protein bS18B (88 aa).

Belongs to the bacterial ribosomal protein bS18 family. Part of the 30S ribosomal subunit. Forms a tight heterodimer with protein bS6.

Its function is as follows. Binds as a heterodimer with protein bS6 to the central domain of the 16S rRNA, where it helps stabilize the platform of the 30S subunit. This Mycolicibacterium paratuberculosis (strain ATCC BAA-968 / K-10) (Mycobacterium paratuberculosis) protein is Small ribosomal subunit protein bS18B.